Here is a 400-residue protein sequence, read N- to C-terminus: CCA-adding enzyme (400 aa).

2 residues coordinate ATP: Gly32 and Arg35. 2 residues coordinate CTP: Gly32 and Arg35. Residues Asp45 and Asp47 each contribute to the Mg(2+) site. Arg116, Asp159, Arg162, Arg165, and Arg168 together coordinate ATP. The CTP site is built by Arg116, Asp159, Arg162, Arg165, and Arg168.

Belongs to the tRNA nucleotidyltransferase/poly(A) polymerase family. Bacterial CCA-adding enzyme type 3 subfamily. Homodimer. Requires Mg(2+) as cofactor.

The catalysed reaction is a tRNA precursor + 2 CTP + ATP = a tRNA with a 3' CCA end + 3 diphosphate. It carries out the reaction a tRNA with a 3' CCA end + 2 CTP + ATP = a tRNA with a 3' CCACCA end + 3 diphosphate. In terms of biological role, catalyzes the addition and repair of the essential 3'-terminal CCA sequence in tRNAs without using a nucleic acid template. Adds these three nucleotides in the order of C, C, and A to the tRNA nucleotide-73, using CTP and ATP as substrates and producing inorganic pyrophosphate. tRNA 3'-terminal CCA addition is required both for tRNA processing and repair. Also involved in tRNA surveillance by mediating tandem CCA addition to generate a CCACCA at the 3' terminus of unstable tRNAs. While stable tRNAs receive only 3'-terminal CCA, unstable tRNAs are marked with CCACCA and rapidly degraded. In Limosilactobacillus fermentum (strain NBRC 3956 / LMG 18251) (Lactobacillus fermentum), this protein is CCA-adding enzyme.